Reading from the N-terminus, the 307-residue chain is Ribonuclease Z (307 aa).

Residues His61, His63, Asp65, His66, His138, Asp208, and His264 each contribute to the Zn(2+) site. The Proton acceptor role is filled by Asp65.

Belongs to the RNase Z family. Homodimer. Zn(2+) serves as cofactor.

The catalysed reaction is Endonucleolytic cleavage of RNA, removing extra 3' nucleotides from tRNA precursor, generating 3' termini of tRNAs. A 3'-hydroxy group is left at the tRNA terminus and a 5'-phosphoryl group is left at the trailer molecule.. Zinc phosphodiesterase, which displays some tRNA 3'-processing endonuclease activity. Probably involved in tRNA maturation, by removing a 3'-trailer from precursor tRNA. Also shows activity toward a broad range of substrates, such as intron containing pre-tRNAs, 5' extended precursors and non-RNA substrates. This is Ribonuclease Z from Pyrococcus furiosus (strain ATCC 43587 / DSM 3638 / JCM 8422 / Vc1).